The chain runs to 109 residues: Glutaredoxin-8 (109 aa).

Positions 5 to 109 (VTKAEEMIKS…EELTKIGLLP (105 aa)) constitute a Glutaredoxin domain. Cysteine 25 and cysteine 28 are oxidised to a cystine.

The protein belongs to the glutaredoxin family. In terms of assembly, monomer.

It localises to the cytoplasm. In terms of biological role, glutathione-dependent oxidoreductase with lower activity compared to the other members of the glutaredoxin family. The disulfide bond functions as an electron carrier in the glutathione-dependent synthesis of deoxyribonucleotides by the enzyme ribonucleotide reductase. This is Glutaredoxin-8 (GRX8) from Saccharomyces cerevisiae (strain ATCC 204508 / S288c) (Baker's yeast).